Here is a 283-residue protein sequence, read N- to C-terminus: Protease HtpX (283 aa).

Helical transmembrane passes span 4–24 (ILLF…ILSV) and 33–53 (GGIL…SLFL). H139 contributes to the Zn(2+) binding site. The active site involves E140. H143 contributes to the Zn(2+) binding site. Helical transmembrane passes span 147–167 (GDMV…IFLS) and 190–210 (IYFL…SIIA). E218 contributes to the Zn(2+) binding site.

This sequence belongs to the peptidase M48B family. Requires Zn(2+) as cofactor.

The protein resides in the cell inner membrane. The sequence is that of Protease HtpX from Haemophilus influenzae (strain PittEE).